A 621-amino-acid polypeptide reads, in one-letter code: 1-deoxy-D-xylulose-5-phosphate synthase (621 aa).

Thiamine diphosphate contacts are provided by residues His80 and 121–123 (GHS). Asp152 contributes to the Mg(2+) binding site. Residues 153–154 (GA), Asn181, Tyr288, and Glu370 each bind thiamine diphosphate. Residue Asn181 participates in Mg(2+) binding.

The protein belongs to the transketolase family. DXPS subfamily. As to quaternary structure, homodimer. The cofactor is Mg(2+). Thiamine diphosphate serves as cofactor.

The catalysed reaction is D-glyceraldehyde 3-phosphate + pyruvate + H(+) = 1-deoxy-D-xylulose 5-phosphate + CO2. The protein operates within metabolic intermediate biosynthesis; 1-deoxy-D-xylulose 5-phosphate biosynthesis; 1-deoxy-D-xylulose 5-phosphate from D-glyceraldehyde 3-phosphate and pyruvate: step 1/1. In terms of biological role, catalyzes the acyloin condensation reaction between C atoms 2 and 3 of pyruvate and glyceraldehyde 3-phosphate to yield 1-deoxy-D-xylulose-5-phosphate (DXP). This Aeromonas hydrophila subsp. hydrophila (strain ATCC 7966 / DSM 30187 / BCRC 13018 / CCUG 14551 / JCM 1027 / KCTC 2358 / NCIMB 9240 / NCTC 8049) protein is 1-deoxy-D-xylulose-5-phosphate synthase.